The following is a 479-amino-acid chain: Anaerobic nitric oxide reductase flavorubredoxin (479 aa).

The interval 30 to 210 is zinc metallo-hydrolase; sequence LRGSSYNSYL…PFSRLVTPKI (181 aa). Fe cation is bound by residues H79, E81, D83, H147, D166, and H227. The Flavodoxin-like domain occupies 254–393; the sequence is ITIFYDTMSN…LCREHGREIA (140 aa). FMN is bound by residues 260-264 and 342-369; these read TMSNN and AFGS…EMSL. The Rubredoxin-like domain maps to 423 to 474; the sequence is GPRMQCSVCQWIYDPAKGEPMQDVAPGTPWSEVPDNFLCPECSLGKDVFEEL. 4 residues coordinate Fe cation: C428, C431, C461, and C464.

It in the N-terminal section; belongs to the zinc metallo-hydrolase group 3 family. As to quaternary structure, homotetramer. Requires Fe cation as cofactor. FMN serves as cofactor.

The protein localises to the cytoplasm. Its pathway is nitrogen metabolism; nitric oxide reduction. In terms of biological role, anaerobic nitric oxide reductase; uses NADH to detoxify nitric oxide (NO), protecting several 4Fe-4S NO-sensitive enzymes. Has at least 2 reductase partners, only one of which (NorW, flavorubredoxin reductase) has been identified. NO probably binds to the di-iron center; electrons enter from the NorW at rubredoxin and are transferred sequentially to the FMN center and the di-iron center. Also able to function as an aerobic oxygen reductase. The protein is Anaerobic nitric oxide reductase flavorubredoxin of Shigella dysenteriae serotype 1 (strain Sd197).